A 277-amino-acid polypeptide reads, in one-letter code: Bifunctional protein FolD (277 aa).

NADP(+) contacts are provided by residues 164 to 166 (GRS), Ser-189, and Thr-230.

It belongs to the tetrahydrofolate dehydrogenase/cyclohydrolase family. As to quaternary structure, homodimer.

It catalyses the reaction (6R)-5,10-methylene-5,6,7,8-tetrahydrofolate + NADP(+) = (6R)-5,10-methenyltetrahydrofolate + NADPH. The catalysed reaction is (6R)-5,10-methenyltetrahydrofolate + H2O = (6R)-10-formyltetrahydrofolate + H(+). It participates in one-carbon metabolism; tetrahydrofolate interconversion. Its function is as follows. Catalyzes the oxidation of 5,10-methylenetetrahydrofolate to 5,10-methenyltetrahydrofolate and then the hydrolysis of 5,10-methenyltetrahydrofolate to 10-formyltetrahydrofolate. This is Bifunctional protein FolD from Clostridium perfringens (strain ATCC 13124 / DSM 756 / JCM 1290 / NCIMB 6125 / NCTC 8237 / Type A).